Reading from the N-terminus, the 151-residue chain is Probable cellulase Cel12b (151 aa).

Active-site residues include Glu-50 and Glu-133.

Belongs to the glycosyl hydrolase 12 (cellulase H) family.

Probable cellulase. Can hydrolyze barley beta-glucan in vitro. Could be important for the survival of M.tuberculosis in the environment, perhaps in amoebal hosts. In Mycobacterium tuberculosis (strain ATCC 25618 / H37Rv), this protein is Probable cellulase Cel12b.